Here is a 2291-residue protein sequence, read N- to C-terminus: Protein Ycf2 A (2291 aa).

Gly1642–Ser1649 is an ATP binding site.

Belongs to the Ycf2 family.

It localises to the plastid. It is found in the chloroplast stroma. In terms of biological role, probable ATPase of unknown function. Its presence in a non-photosynthetic plant (Epifagus virginiana) and experiments in tobacco indicate that it has an essential function which is probably not related to photosynthesis. This Atropa belladonna (Belladonna) protein is Protein Ycf2 A (ycf2-A).